The primary structure comprises 492 residues: Pentatricopeptide repeat-containing protein At4g21705, mitochondrial (492 aa).

The transit peptide at 1–17 (MNILRRIPANLIASRYY) directs the protein to the mitochondrion. PPR repeat units lie at residues 125–159 (NDKT…GFVT), 160–194 (SSLT…NVAP), 195–225 (DNYS…MERR), 231–261 (DWNT…SENR), 266–296 (DGEG…EKDV), 301–335 (INQD…GNCY), 336–370 (DFRV…GKAT), and 371–405 (TPES…EVGS).

It belongs to the PPR family. P subfamily.

It localises to the mitochondrion. The polypeptide is Pentatricopeptide repeat-containing protein At4g21705, mitochondrial (Arabidopsis thaliana (Mouse-ear cress)).